A 63-amino-acid polypeptide reads, in one-letter code: Beta-defensin 6 (63 aa).

Positions 1–22 are cleaved as a signal peptide; it reads MKIHYLLFAFILVMLSPLAAFS. Position 23 is a pyrrolidone carboxylic acid (Gln23). Cystine bridges form between Cys31/Cys59, Cys38/Cys52, and Cys42/Cys60.

The protein belongs to the beta-defensin family. Predominantly expressed in skeletal muscle, also expressed in esophagus, tongue, and trachea. Also expressed in lung when induced by lipopolysaccharide.

Its subcellular location is the secreted. Has potent antibacterial activity against E.coli (ATCC 25922). The polypeptide is Beta-defensin 6 (Defb6) (Mus musculus (Mouse)).